The primary structure comprises 207 residues: Protein-L-isoaspartate O-methyltransferase (207 aa).

The active site involves Ser-56.

It belongs to the methyltransferase superfamily. L-isoaspartyl/D-aspartyl protein methyltransferase family.

The protein resides in the cytoplasm. The enzyme catalyses [protein]-L-isoaspartate + S-adenosyl-L-methionine = [protein]-L-isoaspartate alpha-methyl ester + S-adenosyl-L-homocysteine. Catalyzes the methyl esterification of L-isoaspartyl residues in peptides and proteins that result from spontaneous decomposition of normal L-aspartyl and L-asparaginyl residues. It plays a role in the repair and/or degradation of damaged proteins. The protein is Protein-L-isoaspartate O-methyltransferase of Pyrobaculum islandicum (strain DSM 4184 / JCM 9189 / GEO3).